The sequence spans 626 residues: L-amino-acid oxidase 4 (626 aa).

The first 18 residues, 1-18 (KSFFRSLVAASLVIVSYS), serve as a signal peptide directing secretion. A glycan (N-linked (GlcNAc...) asparagine) is linked at N54. Residues G75, E94, A95, R102, M122, and R123 each coordinate FAD. R123 is an L-glutamate binding site. An L-glutamine-binding site is contributed by R123. R123 is a binding site for L-lysine. Residue R123 coordinates L-phenylalanine. N164, N193, and N331 each carry an N-linked (GlcNAc...) asparagine glycan. V334 provides a ligand contact to FAD. Y457 provides a ligand contact to L-glutamate. Residue Y457 coordinates L-glutamine. Y457 serves as a coordination point for L-lysine. L-phenylalanine is bound at residue Y457. Position 551 (E551) interacts with FAD. A558 is a binding site for L-phenylalanine. W559 and V560 together coordinate FAD.

It belongs to the flavin monoamine oxidase family. FIG1 subfamily. Homodimer. Requires FAD as cofactor. Post-translationally, out of the 4 glycosylated residues, Asn-54 is hypermannosylated. The presence of a hypermannosylated N-glycan on Asn-54 leads to adoption of a more active conformation in the absence of acid activation.

The protein resides in the secreted. It carries out the reaction an L-alpha-amino acid + O2 + H2O = a 2-oxocarboxylate + H2O2 + NH4(+). The catalysed reaction is L-lysine + O2 + H2O = 6-amino-2-oxohexanoate + H2O2 + NH4(+). The enzyme catalyses L-glutamate + O2 + H2O = H2O2 + 2-oxoglutarate + NH4(+). It catalyses the reaction L-arginine + O2 + H2O = 5-guanidino-2-oxopentanoate + H2O2 + NH4(+). It carries out the reaction L-leucine + O2 + H2O = 4-methyl-2-oxopentanoate + H2O2 + NH4(+). The catalysed reaction is L-asparagine + O2 + H2O = 2-oxosuccinamate + H2O2 + NH4(+). The enzyme catalyses L-histidine + O2 + H2O = 3-(imidazol-5-yl)pyruvate + H2O2 + NH4(+). It catalyses the reaction L-isoleucine + O2 + H2O = (S)-3-methyl-2-oxopentanoate + H2O2 + NH4(+). It carries out the reaction L-methionine + O2 + H2O = 4-methylsulfanyl-2-oxobutanoate + H2O2 + NH4(+). The catalysed reaction is L-phenylalanine + O2 + H2O = 3-phenylpyruvate + H2O2 + NH4(+). The enzyme catalyses L-tyrosine + O2 + H2O = 3-(4-hydroxyphenyl)pyruvate + H2O2 + NH4(+). It catalyses the reaction L-glutamine + O2 + H2O = 2-oxoglutaramate + H2O2 + NH4(+). It carries out the reaction L-alanine + O2 + H2O = pyruvate + H2O2 + NH4(+). With respect to regulation, LAAO4 is activated by exposure to acidic pH, the detergent sodium dodecyl sulfate, or freezing. Its function is as follows. Catalyzes the oxidative deamination of L-amino acids with molecular oxygen to the corresponding alpha-keto acids and ammonia. L-glutamine shows the highest relative activity but LAAO4 has a broad substrate specificity, including L-amino acids with big aromatic, acidic and basic side chains. Methyl esters of these L-amino acids are also accepted, ethyl esters are converted but with lower activity, whereas D-Amino acids are not converted. No reaction is detected for small polar amino acids such as L-cysteine or L-aspartate, and very little for small, branched hydrophobic amino acids like L-valine. The polypeptide is L-amino-acid oxidase 4 (Hebeloma cylindrosporum).